Reading from the N-terminus, the 200-residue chain is Glycerol-3-phosphate acyltransferase (200 aa).

5 consecutive transmembrane segments (helical) span residues L6–V26, S56–F76, Q82–F102, A118–I138, and Y141–D161.

This sequence belongs to the PlsY family. As to quaternary structure, probably interacts with PlsX.

The protein localises to the cell inner membrane. It carries out the reaction an acyl phosphate + sn-glycerol 3-phosphate = a 1-acyl-sn-glycero-3-phosphate + phosphate. It functions in the pathway lipid metabolism; phospholipid metabolism. In terms of biological role, catalyzes the transfer of an acyl group from acyl-phosphate (acyl-PO(4)) to glycerol-3-phosphate (G3P) to form lysophosphatidic acid (LPA). This enzyme utilizes acyl-phosphate as fatty acyl donor, but not acyl-CoA or acyl-ACP. This Shewanella sediminis (strain HAW-EB3) protein is Glycerol-3-phosphate acyltransferase.